A 481-amino-acid chain; its full sequence is ATP synthase subunit beta, chloroplastic (481 aa).

Position 162–169 (162–169 (GGAGVGKT)) interacts with ATP.

Belongs to the ATPase alpha/beta chains family. F-type ATPases have 2 components, F(1) - the catalytic core - and F(0) - the membrane proton channel. F(1) has five subunits: alpha(3), beta(3), gamma(1), delta(1), epsilon(1). F(0) has four main subunits: a(1), b(1), b'(1) and c(10-14). The alpha and beta chains form an alternating ring which encloses part of the gamma chain. F(1) is attached to F(0) by a central stalk formed by the gamma and epsilon chains, while a peripheral stalk is formed by the delta, b and b' chains.

The protein resides in the plastid. The protein localises to the chloroplast thylakoid membrane. It catalyses the reaction ATP + H2O + 4 H(+)(in) = ADP + phosphate + 5 H(+)(out). Its function is as follows. F(1)F(0) ATP synthase produces ATP from ADP in the presence of a proton or sodium gradient. F-type ATPases consist of two structural domains, F(1) containing the extramembraneous catalytic core and F(0) containing the membrane proton channel, linked together by a central stalk and a peripheral stalk. During catalysis, ATP synthesis in the catalytic domain of F(1) is coupled via a rotary mechanism of the central stalk subunits to proton translocation. Functionally, produces ATP from ADP in the presence of a proton gradient across the membrane. The catalytic sites are hosted primarily by the beta subunits. In Chlamydomonas reinhardtii (Chlamydomonas smithii), this protein is ATP synthase subunit beta, chloroplastic.